Here is a 287-residue protein sequence, read N- to C-terminus: Orotidine 5'-phosphate decarboxylase (287 aa).

The active-site Proton donor is Lys95.

The protein belongs to the OMP decarboxylase family. Type 2 subfamily.

It carries out the reaction orotidine 5'-phosphate + H(+) = UMP + CO2. Its pathway is pyrimidine metabolism; UMP biosynthesis via de novo pathway; UMP from orotate: step 2/2. This is Orotidine 5'-phosphate decarboxylase from Albidiferax ferrireducens (strain ATCC BAA-621 / DSM 15236 / T118) (Rhodoferax ferrireducens).